Here is a 363-residue protein sequence, read N- to C-terminus: MGLRKKNARNPPVLSHEFMVQNHADMVSCVGMFFVLGLMFEGTSEMSIAFLTLQHGVVVPAEGLPSGSRTLYHYGVKDLATVFFYMLVAIIIHATIQEYVLDKLSRRLQLTKGKQNKLNEAGQLSVFYIVSGIWGMIILASENCLSDPTLLWKSQPHNMMTFQMKFFYISQLAYWFHSFPELYFQKVRKQDIPGQLIYIGLHLFHIGGAYLLYLNHLGLLLLMLHYAVELLSSVCSLLYFGDERYQKGLSLWPIVFISGRLVTLIVSVVTVGLHLAGTNRNGNALSGNVNVLAAKIAVLSSSCSIQVYITWTLTTVWLQRWLEDANLHVCGRKRRSRARKGTENGVENPNRIDSPPKKKEKAP.

Residues 1–29 (MGLRKKNARNPPVLSHEFMVQNHADMVSC) lie on the Cytoplasmic side of the membrane. Residues 30 to 50 (VGMFFVLGLMFEGTSEMSIAF) traverse the membrane as a helical segment. The Lumenal segment spans residues 51–80 (LTLQHGVVVPAEGLPSGSRTLYHYGVKDLA). The helical transmembrane segment at 81 to 101 (TVFFYMLVAIIIHATIQEYVL) threads the bilayer. The Cytoplasmic portion of the chain corresponds to 102–120 (DKLSRRLQLTKGKQNKLNE). The 209-residue stretch at 116–324 (NKLNEAGQLS…TVWLQRWLED (209 aa)) folds into the TLC domain. The helical transmembrane segment at 121–141 (AGQLSVFYIVSGIWGMIILAS) threads the bilayer. The Lumenal portion of the chain corresponds to 142 to 159 (ENCLSDPTLLWKSQPHNM). Residues 160-179 (MTFQMKFFYISQLAYWFHSF) form a helical membrane-spanning segment. Residues 180–191 (PELYFQKVRKQD) are Cytoplasmic-facing. The helical transmembrane segment at 192–214 (IPGQLIYIGLHLFHIGGAYLLYL) threads the bilayer. The Lumenal segment spans residues 215 to 218 (NHLG). Residues 219 to 241 (LLLLMLHYAVELLSSVCSLLYFG) traverse the membrane as a helical segment. Over 242-250 (DERYQKGLS) the chain is Cytoplasmic. A helical transmembrane segment spans residues 251-271 (LWPIVFISGRLVTLIVSVVTV). Over 272-295 (GLHLAGTNRNGNALSGNVNVLAAK) the chain is Lumenal. The chain crosses the membrane as a helical span at residues 296–316 (IAVLSSSCSIQVYITWTLTTV). At 317–363 (WLQRWLEDANLHVCGRKRRSRARKGTENGVENPNRIDSPPKKKEKAP) the chain is on the cytoplasmic side. A disordered region spans residues 338-363 (ARKGTENGVENPNRIDSPPKKKEKAP). Residues 354–363 (SPPKKKEKAP) show a composition bias toward basic and acidic residues.

This sequence belongs to the TRAM family.

The protein localises to the endoplasmic reticulum membrane. In terms of biological role, stimulatory or required for the translocation of secretory proteins across the ER membrane. The polypeptide is Translocating chain-associated membrane protein 1-like 1 (Tram1l1) (Mus musculus (Mouse)).